A 409-amino-acid polypeptide reads, in one-letter code: Galactosylgalactosylxylosylprotein 3-beta-glucuronosyltransferase S (409 aa).

Residues 1–45 (MSSARLLESQTSDEDNEDIERRPHQSHSRSCSNNTTPTHPPHPMV) form a disordered region. The Cytoplasmic portion of the chain corresponds to 1–53 (MSSARLLESQTSDEDNEDIERRPHQSHSRSCSNNTTPTHPPHPMVRKGGVARR). Position 9 is a phosphoserine (Ser9). A Phosphothreonine modification is found at Thr11. 2 positions are modified to phosphoserine: Ser12 and Ser32. Residues 54-73 (ICLIGGALFLLLVALCYLTL) form a helical; Signal-anchor for type II membrane protein membrane-spanning segment. The Lumenal portion of the chain corresponds to 74–409 (SGDTRLGGSE…RENPHSKILS (336 aa)). N-linked (GlcNAc...) asparagine glycans are attached at residues Asn102 and Asn223. A Mn(2+)-binding site is contributed by Asp235. The active-site Proton acceptor is Glu318. N-linked (GlcNAc...) asparagine glycosylation is present at Asn338. Residues 389–409 (EGRNALISKNGRENPHSKILS) are disordered. Positions 398 to 409 (NGRENPHSKILS) are enriched in basic and acidic residues.

It belongs to the glycosyltransferase 43 family. Requires Mn(2+) as cofactor.

It is found in the golgi apparatus membrane. It catalyses the reaction 3-O-(beta-D-galactosyl-(1-&gt;3)-beta-D-galactosyl-(1-&gt;4)-beta-D-xylosyl)-L-seryl-[protein] + UDP-alpha-D-glucuronate = 3-O-(beta-D-GlcA-(1-&gt;3)-beta-D-Gal-(1-&gt;3)-beta-D-Gal-(1-&gt;4)-beta-D-Xyl)-L-seryl-[protein] + UDP + H(+). The protein operates within protein modification; protein glycosylation. In terms of biological role, involved in the biosynthesis of L2/HNK-1 carbohydrate epitope on both glycolipids and glycoproteins. Enzyme has a broad specificity. In Drosophila melanogaster (Fruit fly), this protein is Galactosylgalactosylxylosylprotein 3-beta-glucuronosyltransferase S (GlcAT-S).